A 394-amino-acid chain; its full sequence is Elongation factor Tu 1 (394 aa).

The 195-residue stretch at 10–204 (KPHVNVGTIG…ALDSYIPEPE (195 aa)) folds into the tr-type G domain. A G1 region spans residues 19–26 (GHVDHGKT). Residue 19-26 (GHVDHGKT) coordinates GTP. A Mg(2+)-binding site is contributed by T26. A G2 region spans residues 60–64 (GITIS). A G3 region spans residues 81 to 84 (DCPG). Residues 81 to 85 (DCPGH) and 136 to 139 (NKCD) contribute to the GTP site. Residues 136-139 (NKCD) form a G4 region. The interval 174-176 (SAL) is G5.

This sequence belongs to the TRAFAC class translation factor GTPase superfamily. Classic translation factor GTPase family. EF-Tu/EF-1A subfamily. As to quaternary structure, monomer.

It localises to the cytoplasm. It catalyses the reaction GTP + H2O = GDP + phosphate + H(+). GTP hydrolase that promotes the GTP-dependent binding of aminoacyl-tRNA to the A-site of ribosomes during protein biosynthesis. This Vibrio vulnificus (strain YJ016) protein is Elongation factor Tu 1.